Reading from the N-terminus, the 544-residue chain is Protein angel homolog 2 (544 aa).

The protein belongs to the CCR4/nocturin family.

The chain is Protein angel homolog 2 (ANGEL2) from Bos taurus (Bovine).